The following is a 599-amino-acid chain: Elongation factor 4 (599 aa).

One can recognise a tr-type G domain in the interval serine 5–threonine 187. GTP contacts are provided by residues aspartate 17–threonine 22 and asparagine 134–aspartate 137.

This sequence belongs to the TRAFAC class translation factor GTPase superfamily. Classic translation factor GTPase family. LepA subfamily.

Its subcellular location is the cell inner membrane. It carries out the reaction GTP + H2O = GDP + phosphate + H(+). Functionally, required for accurate and efficient protein synthesis under certain stress conditions. May act as a fidelity factor of the translation reaction, by catalyzing a one-codon backward translocation of tRNAs on improperly translocated ribosomes. Back-translocation proceeds from a post-translocation (POST) complex to a pre-translocation (PRE) complex, thus giving elongation factor G a second chance to translocate the tRNAs correctly. Binds to ribosomes in a GTP-dependent manner. This Ectopseudomonas mendocina (strain ymp) (Pseudomonas mendocina) protein is Elongation factor 4.